Reading from the N-terminus, the 530-residue chain is MSAFAQPPGAGRKAVDVAIVGSGPTGMALAALLGCQGRSVVVLERYTGLYNLPRAAAFDDETMRTFQKLGVAEKMLPGTNVQRGYVWVNGDDEVLLDIEFDNPGRCGWPAQYMMYQPHLESVLDELITSLPTVEIRRGMTVESVDQQDGDDVLVRATDVEGSAYLVRARYVVGCDGGNGVVRQFAGGELDDYGFFENWLVCDFQLNRDVPDLPTFRQVCDPAEPIAIVNIGPRFHRFSFRLESAANREEVVHPDKVWPRVATYLTPEDAELVRVANYTFRSCITTQWRHRRILLAGDAAHQMPPFLAQGMVSGIRDARNLAWKLDMVLAGHPDSLLDTYQAEREPHVRYITEKAIELGRVQTMRDTALAAQRDAQMIAARKANQKPDKLRYPALSGGLIANHGDMFPQGLVSTSSTTALFDEIAGTGWLVVADGPQVLSGIAEGDRTAFTEIGGKEVIFGLTSMFDGAPVSDTAGVYTRWFAAHECVAAIVRPDGYVFGLARDAAELAGLAKELVAAVAPVPSRPPAPTA.

The catalysed reaction is resorcinol + NADH + O2 + H(+) = benzene-1,2,4-triol + NAD(+) + H2O. Its function is as follows. Single-component hydroxylase that is part of the gamma-resorcylate (GRA) degradation pathway. GRA is initially converted by GRA decarboxylase to resorcinol, which is hydroxylated by resorcinol 4-hydroxylase. The sequence is that of Probable NADH-specific resorcinol 4-hydroxylase (tsdB) from Rhodococcus jostii (strain RHA1).